The chain runs to 96 residues: (4S)-4-hydroxy-5-phosphonooxypentane-2,3-dione isomerase (96 aa).

The ABM domain occupies 2-91; the sequence is HVTLVEINVK…MTGPRKKTVF (90 aa).

Belongs to the LsrG family. Homodimer.

Its subcellular location is the cytoplasm. The enzyme catalyses (2S)-2-hydroxy-3,4-dioxopentyl phosphate = 3-hydroxy-2,4-dioxopentyl phosphate. Its function is as follows. Involved in the degradation of phospho-AI-2, thereby terminating induction of the lsr operon and closing the AI-2 signaling cycle. Catalyzes the conversion of (4S)-4-hydroxy-5-phosphonooxypentane-2,3-dione (P-DPD) to 3-hydroxy-5-phosphonooxypentane-2,4-dione (P-HPD). The protein is (4S)-4-hydroxy-5-phosphonooxypentane-2,3-dione isomerase of Yersinia pseudotuberculosis serotype O:1b (strain IP 31758).